The following is a 131-amino-acid chain: uncharacterized protein (131 aa).

This is an uncharacterized protein from Aquifex aeolicus (strain VF5).